The following is a 371-amino-acid chain: Protein-glutamate methylesterase/protein-glutamine glutaminase 3 (371 aa).

The 116-residue stretch at 5 to 120 folds into the Response regulatory domain; the sequence is RVVVIDDSAY…SEEILTIRED (116 aa). At D56 the chain carries 4-aspartylphosphate. Positions 174–362 constitute a CheB-type methylesterase domain; the sequence is PAGRLEVVAI…LDRMSREIIQ (189 aa). Active-site residues include S186, H213, and D309.

It belongs to the CheB family. Post-translationally, phosphorylated by CheA. Phosphorylation of the N-terminal regulatory domain activates the methylesterase activity.

Its subcellular location is the cytoplasm. It carries out the reaction [protein]-L-glutamate 5-O-methyl ester + H2O = L-glutamyl-[protein] + methanol + H(+). It catalyses the reaction L-glutaminyl-[protein] + H2O = L-glutamyl-[protein] + NH4(+). In terms of biological role, involved in chemotaxis. Part of a chemotaxis signal transduction system that modulates chemotaxis in response to various stimuli. Catalyzes the demethylation of specific methylglutamate residues introduced into the chemoreceptors (methyl-accepting chemotaxis proteins or MCP) by CheR. Also mediates the irreversible deamidation of specific glutamine residues to glutamic acid. The polypeptide is Protein-glutamate methylesterase/protein-glutamine glutaminase 3 (Geobacter sulfurreducens (strain ATCC 51573 / DSM 12127 / PCA)).